The sequence spans 289 residues: ATP synthase gamma chain (289 aa).

The protein belongs to the ATPase gamma chain family. F-type ATPases have 2 components, CF(1) - the catalytic core - and CF(0) - the membrane proton channel. CF(1) has five subunits: alpha(3), beta(3), gamma(1), delta(1), epsilon(1). CF(0) has three main subunits: a, b and c.

It is found in the cell inner membrane. Its function is as follows. Produces ATP from ADP in the presence of a proton gradient across the membrane. The gamma chain is believed to be important in regulating ATPase activity and the flow of protons through the CF(0) complex. The protein is ATP synthase gamma chain of Haemophilus influenzae (strain PittEE).